Reading from the N-terminus, the 201-residue chain is Syndecan-2 (201 aa).

The N-terminal stretch at 1–18 (MRRAWILLTLGLVACVSA) is a signal peptide. Topologically, residues 19-144 (ESRAELTSDK…HSDSLFKRTE (126 aa)) are extracellular. O-linked (Xyl...) (glycosaminoglycan) serine glycosylation is found at Ser-41, Ser-55, and Ser-57. Disordered stretches follow at residues 42-70 (GVYPIDDDDYASASGSGADEDVESPELTT) and 90-130 (TLNI…DTNV). The segment covering 90-102 (TLNIQNKIPAQTK) has biased composition (polar residues). An O-linked (GalNAc...) threonine glycan is attached at Thr-101. Residues 103–123 (SPEETDKEKVHLSDSERKMDP) are compositionally biased toward basic and acidic residues. Ser-115 carries the post-translational modification Phosphoserine; by FAM20C. Residues 145-169 (VLAAVIAGGVIGFLFAIFLILLLVY) traverse the membrane as a helical segment. The Cytoplasmic portion of the chain corresponds to 170–201 (RMRKKDEGSYDLGERKPSSAAYQKAPTKEFYA). The disordered stretch occupies residues 178–201 (SYDLGERKPSSAAYQKAPTKEFYA). A Phosphoserine modification is found at Ser-187.

This sequence belongs to the syndecan proteoglycan family. In terms of assembly, interacts (via cytoplasmic domain) with SARM1. Forms a complex with SDCBP and PDCD6IP. O-glycosylated with core 1 or possibly core 8 glycans. Contains heparan sulfate. Also contains chondroitin sulfate.

Its subcellular location is the membrane. Cell surface proteoglycan which regulates dendritic arbor morphogenesis. The polypeptide is Syndecan-2 (SDC2) (Homo sapiens (Human)).